A 397-amino-acid polypeptide reads, in one-letter code: UDP-GlcNAc:betaGal beta-1,3-N-acetylglucosaminyltransferase 8 (397 aa).

Residues 1–6 (MRCPKC) are Cytoplasmic-facing. Residues 7 to 23 (LLCLSALLTLLGLKVYI) traverse the membrane as a helical; Signal-anchor for type II membrane protein segment. At 24–397 (EWTSESRLSK…KQLQDPRLQC (374 aa)) the chain is on the lumenal side. The tract at residues 33–58 (KAYPSPRGTPPSPTPANPEPTLPANL) is disordered. Over residues 39–53 (RGTPPSPTPANPEPT) the composition is skewed to pro residues. N-linked (GlcNAc...) asparagine glycosylation is present at Asn-57.

It belongs to the glycosyltransferase 31 family. In terms of assembly, interacts with B3GNT2; this interaction greatly increases B3GNT2 catalytic activity, independently of B3GNT8 enzymatic activity. As to expression, highly expressed in small intestine, pancreas, spleen, bone marrow, lung, throat, and ileum, and weakly in fetal brain, cerebellum, heart, liver, tongue, breast, uteri, and testis. Not detected in colon. Differentially expressed in human tumor cell lines.

It is found in the golgi apparatus membrane. It functions in the pathway protein modification; protein glycosylation. Beta-1,3-N-acetylglucosaminyltransferase that plays a role in the elongation of specific branch structures of multiantennary N-glycans. Has strong activity towards tetraantennary N-glycans and 2,6 triantennary glycans. This is UDP-GlcNAc:betaGal beta-1,3-N-acetylglucosaminyltransferase 8 from Homo sapiens (Human).